Reading from the N-terminus, the 1222-residue chain is Protein SCP160 (1222 aa).

Polar residues predominate over residues 1–12; the sequence is MSEEQTAIDSPP. Residues 1–59 form a disordered region; that stretch reads MSEEQTAIDSPPSTVEGSVETVTTIDSPSTTASTIAATAEEHPQLEKKPTPLPSLKDLP. Residues 13 to 38 show a composition bias toward low complexity; the sequence is STVEGSVETVTTIDSPSTTASTIAAT. A compositionally biased stretch (basic and acidic residues) spans 39–49; that stretch reads AEEHPQLEKKP. A Phosphothreonine modification is found at T50. 5 positions are modified to phosphoserine: S54, S63, S85, S87, and S89. The interval 79–98 is disordered; it reads KPAVSNSPSPSPSAPSLTTG. A KH 1 domain is found at 177-249; sequence PINAVIEVPS…ESVNLAKAKI (73 aa). Phosphoserine is present on S630. KH domains are found at residues 634 to 702, 712 to 771, 782 to 851, 861 to 929, and 939 to 1001; these read KSKM…KKYL, IITK…HEEL, GHKM…AKRV, FVTE…VEEI, and SVTK…EKKI. S1112 bears the Phosphoserine mark. Residues 1153 to 1216 enclose the KH 7 domain; that stretch reads YAGYVWGADT…AGVEKAGEMV (64 aa).

The protein resides in the endoplasmic reticulum membrane. It is found in the nucleus membrane. Its function is as follows. Involved in the control of mitotic chromosome transmission. Required during cell division for faithful partitioning of the ER-nuclear envelope membranes which, in S.cerevisiae, enclose the duplicated chromosomes. In Saccharomyces cerevisiae (strain ATCC 204508 / S288c) (Baker's yeast), this protein is Protein SCP160 (SCP160).